The primary structure comprises 128 residues: Large ribosomal subunit protein bL20c (128 aa).

This sequence belongs to the bacterial ribosomal protein bL20 family.

It localises to the plastid. The protein localises to the chloroplast. Functionally, binds directly to 23S ribosomal RNA and is necessary for the in vitro assembly process of the 50S ribosomal subunit. It is not involved in the protein synthesizing functions of that subunit. The polypeptide is Large ribosomal subunit protein bL20c (Daucus carota (Wild carrot)).